The chain runs to 314 residues: MFKRTVILLAGPTGSGKTAVSLKLAPLVDGEIISVDSMQVYQGMDIGTAKVSLTDRKEVPHHLIDVCHVQESFNAVDFYYHAVQACQDILSRNKVPILVGGTGFYFHTFLSGPPSGPSPDFVLREQLTLEAQERGISALYQELELLDPVYAATITKHDKNKIIRALEIIRKTGSKVSSYAWQSTVNESKEYHCRRWLLSPDPELLRHNILERCDQMLEEGLLDEVQALLAAGIKGNSSASRAIGYREWIEFLDLGSPPDLFEITKQKFITNTWRYTKKQRTWFKRYSLFRELRPMGMTLDDMAKKIAQDYFLCG.

11–18 (GPTGSGKT) is an ATP binding site. 13-18 (TGSGKT) contacts substrate. Positions 36–39 (DSMQ) are interaction with substrate tRNA.

It belongs to the IPP transferase family. As to quaternary structure, monomer. Requires Mg(2+) as cofactor.

The enzyme catalyses adenosine(37) in tRNA + dimethylallyl diphosphate = N(6)-dimethylallyladenosine(37) in tRNA + diphosphate. In terms of biological role, catalyzes the transfer of a dimethylallyl group onto the adenine at position 37 in tRNAs that read codons beginning with uridine, leading to the formation of N6-(dimethylallyl)adenosine (i(6)A). The polypeptide is tRNA dimethylallyltransferase (Chlamydia trachomatis serovar D (strain ATCC VR-885 / DSM 19411 / UW-3/Cx)).